The following is a 59-amino-acid chain: Large ribosomal subunit protein bL33 (59 aa).

It belongs to the bacterial ribosomal protein bL33 family.

This chain is Large ribosomal subunit protein bL33, found in Borrelia recurrentis (strain A1).